The sequence spans 203 residues: MNNLKQGKFITFEGGEGIGKSTQSQMLYEYLQSQNTPVILTREVGGTIVAEKMREILVHEELLPMSELLQAMAARYDHMARKIIPALQEGHIVICDRFIESTVCYQGLELENGIDLVYNLHKTLMPSLMPDITFFIDVEPDTAIKRVNSRNMNNKFDIRGIDFYKKIYYCFKELSNRFPERIKTIKASDLSPLEVHELIKKHL.

14 to 21 lines the ATP pocket; the sequence is GGEGIGKS.

The protein belongs to the thymidylate kinase family.

It carries out the reaction dTMP + ATP = dTDP + ADP. Phosphorylation of dTMP to form dTDP in both de novo and salvage pathways of dTTP synthesis. This is Thymidylate kinase from Rickettsia conorii (strain ATCC VR-613 / Malish 7).